A 711-amino-acid polypeptide reads, in one-letter code: Pentatricopeptide repeat-containing protein At5g46580, chloroplastic (711 aa).

Residues Met-1 to Ser-43 constitute a chloroplast transit peptide. 10 PPR repeats span residues Glu-185–Leu-219, Asp-220–Pro-254, Asp-255–Pro-289, Asp-290–Pro-324, Asn-325–Pro-359, Asn-360–Met-394, Asp-395–Ser-425, Asp-431–Val-465, Asn-466–Pro-500, and Asp-501–Leu-535. The Smr domain occupies Leu-614–Val-696.

Belongs to the PPR family. P subfamily.

The protein resides in the plastid. Its subcellular location is the chloroplast. This is Pentatricopeptide repeat-containing protein At5g46580, chloroplastic from Arabidopsis thaliana (Mouse-ear cress).